Here is a 359-residue protein sequence, read N- to C-terminus: Phospho-N-acetylmuramoyl-pentapeptide-transferase (359 aa).

10 helical membrane-spanning segments follow: residues 3 to 23, 55 to 75, 84 to 104, 117 to 137, 156 to 176, 187 to 207, 231 to 251, 255 to 275, 280 to 300, and 334 to 354; these read QIII…PVLI, VAIL…GIAF, GLLV…DDFI, TSKT…VLQF, IATV…LVMS, LDGL…IVTF, LAVI…WNAA, IFMG…LSVT, LLAV…VLQI, and FWLL…GEWL.

Belongs to the glycosyltransferase 4 family. MraY subfamily. Requires Mg(2+) as cofactor.

It localises to the cell membrane. The catalysed reaction is UDP-N-acetyl-alpha-D-muramoyl-L-alanyl-gamma-D-glutamyl-meso-2,6-diaminopimeloyl-D-alanyl-D-alanine + di-trans,octa-cis-undecaprenyl phosphate = di-trans,octa-cis-undecaprenyl diphospho-N-acetyl-alpha-D-muramoyl-L-alanyl-D-glutamyl-meso-2,6-diaminopimeloyl-D-alanyl-D-alanine + UMP. It participates in cell wall biogenesis; peptidoglycan biosynthesis. In terms of biological role, catalyzes the initial step of the lipid cycle reactions in the biosynthesis of the cell wall peptidoglycan: transfers peptidoglycan precursor phospho-MurNAc-pentapeptide from UDP-MurNAc-pentapeptide onto the lipid carrier undecaprenyl phosphate, yielding undecaprenyl-pyrophosphoryl-MurNAc-pentapeptide, known as lipid I. The protein is Phospho-N-acetylmuramoyl-pentapeptide-transferase of Mycobacteroides abscessus (strain ATCC 19977 / DSM 44196 / CCUG 20993 / CIP 104536 / JCM 13569 / NCTC 13031 / TMC 1543 / L948) (Mycobacterium abscessus).